The sequence spans 634 residues: Mitochondrial Rho GTPase 1 (634 aa).

The Cytoplasmic portion of the chain corresponds to 1–604 (MLCCMRICVC…PRSEEDVEGK (604 aa)). A Miro 1 domain is found at 2–171 (LCCMRICVCG…FFLCQKAVTH (170 aa)). GTP is bound by residues 11 to 18 (GDEGTGKS), 60 to 64 (DTSAV), and 116 to 119 (NKSD). 2 EF-hand domains span residues 187 to 222 (AAVA…CFEK) and 307 to 342 (EGYR…TPGL). Asp200, Asp202, Asp204, Tyr206, Glu211, Asp320, Asp322, Asp324, and Glu331 together coordinate Ca(2+). The interval 399 to 419 (NPSTTAALKVTRPRKRRKRPG) is disordered. Residues 409 to 419 (TRPRKRRKRPG) show a composition bias toward basic residues. The Miro 2 domain maps to 423-589 (RNVVLGHIVG…FVHIAEAAME (167 aa)). Residues 432–439 (GAPGSGKS), 468–472 (ELPGG), and 538–541 (LKAD) each bind GTP. The helical; Anchor for type IV membrane protein transmembrane segment at 605-625 (WMSWGIALGAVVCAGAAAVMI) threads the bilayer. Residues 626-634 (WRRVSGSGV) are Mitochondrial intermembrane-facing.

The protein belongs to the mitochondrial Rho GTPase family.

The protein localises to the mitochondrion outer membrane. Mitochondrial GTPase involved in mitochondrial trafficking. Probably involved in control of anterograde transport of mitochondria and their subcellular distribution. The protein is Mitochondrial Rho GTPase 1 (gem1) of Emericella nidulans (strain FGSC A4 / ATCC 38163 / CBS 112.46 / NRRL 194 / M139) (Aspergillus nidulans).